Reading from the N-terminus, the 85-residue chain is Large ribosomal subunit protein bL27 (85 aa).

The disordered stretch occupies residues 1 to 20 (MAHKKAAGSSRNGRDSNPKM).

It belongs to the bacterial ribosomal protein bL27 family.

This is Large ribosomal subunit protein bL27 from Psychrobacter arcticus (strain DSM 17307 / VKM B-2377 / 273-4).